Here is a 302-residue protein sequence, read N- to C-terminus: MYRKHIISIPDFSREELELVVDTAARLKQSPRGDLLQDKLVASCFFEPSTRTRLSFETAVQRLGGNIIGFADGGNTSAKKGETLADSIKIISSYTDAVVMRHPKEGAARLASEFSAVPVINGGDGSNQHPTQTLLDLFSIRETQGRLDGLTVAFAGDLKYGRTVHSLAQALSLFGARFYFVSPEVLAMPDYICEELDEKGISYTVADSLEAVIPEVDVLYMTRVQRERFDEAEFRKIQGQYALRADMLKHARPGMKVLHPLPRVDEIAVDVDATPHAYYFEQAKNGVYARQALLSLVLNETV.

The carbamoyl phosphate site is built by arginine 51 and threonine 52. Lysine 80 contacts L-aspartate. Residues arginine 101, histidine 129, and glutamine 132 each coordinate carbamoyl phosphate. Arginine 162 and arginine 223 together coordinate L-aspartate. Carbamoyl phosphate contacts are provided by leucine 261 and proline 262.

The protein belongs to the aspartate/ornithine carbamoyltransferase superfamily. ATCase family. In terms of assembly, heterododecamer (2C3:3R2) of six catalytic PyrB chains organized as two trimers (C3), and six regulatory PyrI chains organized as three dimers (R2).

It catalyses the reaction carbamoyl phosphate + L-aspartate = N-carbamoyl-L-aspartate + phosphate + H(+). Its pathway is pyrimidine metabolism; UMP biosynthesis via de novo pathway; (S)-dihydroorotate from bicarbonate: step 2/3. Functionally, catalyzes the condensation of carbamoyl phosphate and aspartate to form carbamoyl aspartate and inorganic phosphate, the committed step in the de novo pyrimidine nucleotide biosynthesis pathway. This Chromobacterium violaceum (strain ATCC 12472 / DSM 30191 / JCM 1249 / CCUG 213 / NBRC 12614 / NCIMB 9131 / NCTC 9757 / MK) protein is Aspartate carbamoyltransferase catalytic subunit.